The primary structure comprises 329 residues: Phenylalanine--tRNA ligase alpha subunit (329 aa).

Glu254 is a Mg(2+) binding site.

The protein belongs to the class-II aminoacyl-tRNA synthetase family. Phe-tRNA synthetase alpha subunit type 1 subfamily. Tetramer of two alpha and two beta subunits. It depends on Mg(2+) as a cofactor.

It is found in the cytoplasm. It catalyses the reaction tRNA(Phe) + L-phenylalanine + ATP = L-phenylalanyl-tRNA(Phe) + AMP + diphosphate + H(+). The polypeptide is Phenylalanine--tRNA ligase alpha subunit (pheS) (Haemophilus influenzae (strain ATCC 51907 / DSM 11121 / KW20 / Rd)).